The primary structure comprises 459 residues: VGFKAGVKDYKLTYYTPDYETKDTDILAAFRMTPQPGVPPEEAGAAVAAESSTGTWTTVWTDGLTSLDRYKGRCYHIEPVAGEENQYIAYVAYPLDLFEEGSVTNMFTSIVGNVFGFKALRALRLDDLRIPPAYSKTFQGPPHGIQVERDKLNKYGRPLLGCTIKPKLGLSAKNYGRAVYECLRGGLDFTKDDENVNSQPFMRWRDRFLFCAEAIYKAQPETGEIKGHYLNATAGTCEEMIKRAVFARELGVPIVMHDYLTGGFTANTSLAHYCRDNGLLLHIHRAMHAVIDRQKNHGIHFRVLAKALRMSGGDHIHSGTVVGKLEGERDITLGFVDLLRDDFIEKDRSRGIYFTQDWVSLPGVLPVASGGIHVWHMPALTEIFGDDSVLQFGGGTLGHPWGNAPGAVANRVALEACVQARNEGRDLAREGNEIIREPCKWSPELAAACEVWKEIKFEF.

N6,N6,N6-trimethyllysine is present on Lys-4. Residues Asn-113 and Thr-163 each contribute to the substrate site. Lys-165 (proton acceptor) is an active-site residue. Lys-167 contributes to the substrate binding site. Residues Lys-191, Asp-193, and Glu-194 each contribute to the Mg(2+) site. Lys-191 is modified (N6-carboxylysine). Catalysis depends on His-284, which acts as the Proton acceptor. Substrate contacts are provided by Arg-285, His-317, and Ser-369.

Belongs to the RuBisCO large chain family. Type I subfamily. In terms of assembly, heterohexadecamer of 8 large chains and 8 small chains; disulfide-linked. The disulfide link is formed within the large subunit homodimers. Mg(2+) is required as a cofactor. The disulfide bond which can form in the large chain dimeric partners within the hexadecamer appears to be associated with oxidative stress and protein turnover.

It is found in the plastid. It localises to the chloroplast. The catalysed reaction is 2 (2R)-3-phosphoglycerate + 2 H(+) = D-ribulose 1,5-bisphosphate + CO2 + H2O. It carries out the reaction D-ribulose 1,5-bisphosphate + O2 = 2-phosphoglycolate + (2R)-3-phosphoglycerate + 2 H(+). RuBisCO catalyzes two reactions: the carboxylation of D-ribulose 1,5-bisphosphate, the primary event in carbon dioxide fixation, as well as the oxidative fragmentation of the pentose substrate in the photorespiration process. Both reactions occur simultaneously and in competition at the same active site. This chain is Ribulose bisphosphate carboxylase large chain, found in Parnassia fimbriata (Fringed grass-of-Parnassus).